A 284-amino-acid polypeptide reads, in one-letter code: Bifunctional protein FolD 1 (284 aa).

Residues 166–168 (GAS) and isoleucine 232 each bind NADP(+).

Belongs to the tetrahydrofolate dehydrogenase/cyclohydrolase family. As to quaternary structure, homodimer.

The catalysed reaction is (6R)-5,10-methylene-5,6,7,8-tetrahydrofolate + NADP(+) = (6R)-5,10-methenyltetrahydrofolate + NADPH. The enzyme catalyses (6R)-5,10-methenyltetrahydrofolate + H2O = (6R)-10-formyltetrahydrofolate + H(+). The protein operates within one-carbon metabolism; tetrahydrofolate interconversion. Its function is as follows. Catalyzes the oxidation of 5,10-methylenetetrahydrofolate to 5,10-methenyltetrahydrofolate and then the hydrolysis of 5,10-methenyltetrahydrofolate to 10-formyltetrahydrofolate. This is Bifunctional protein FolD 1 from Ectopseudomonas mendocina (strain ymp) (Pseudomonas mendocina).